We begin with the raw amino-acid sequence, 407 residues long: Acetate kinase (407 aa).

Residue N10 participates in Mg(2+) binding. K17 is an ATP binding site. R91 lines the substrate pocket. D150 (proton donor/acceptor) is an active-site residue. ATP is bound by residues H210–G214, D285–R287, and G338–N342. Mg(2+) is bound at residue E392.

It belongs to the acetokinase family. In terms of assembly, homodimer. It depends on Mg(2+) as a cofactor. The cofactor is Mn(2+).

It is found in the cytoplasm. It catalyses the reaction acetate + ATP = acetyl phosphate + ADP. Its pathway is metabolic intermediate biosynthesis; acetyl-CoA biosynthesis; acetyl-CoA from acetate: step 1/2. Catalyzes the formation of acetyl phosphate from acetate and ATP. Can also catalyze the reverse reaction. The protein is Acetate kinase of Mannheimia succiniciproducens (strain KCTC 0769BP / MBEL55E).